We begin with the raw amino-acid sequence, 156 residues long: Ribosomal RNA large subunit methyltransferase H (156 aa).

Residues Leu73, Gly104, and 123–128 (LSKLTL) each bind S-adenosyl-L-methionine.

Belongs to the RNA methyltransferase RlmH family. Homodimer.

It is found in the cytoplasm. It carries out the reaction pseudouridine(1915) in 23S rRNA + S-adenosyl-L-methionine = N(3)-methylpseudouridine(1915) in 23S rRNA + S-adenosyl-L-homocysteine + H(+). Functionally, specifically methylates the pseudouridine at position 1915 (m3Psi1915) in 23S rRNA. This Hydrogenovibrio crunogenus (strain DSM 25203 / XCL-2) (Thiomicrospira crunogena) protein is Ribosomal RNA large subunit methyltransferase H.